Reading from the N-terminus, the 229-residue chain is MDMSSAESVKSVVTDPKLVEERRHQIISAATKLFSEQGYYTTTILQIAREAKVSTGLIYQYFGDKDDILFLTLKNVLDTYEQEIPRQIEGLTHPVERLCHAVWAYCAVVDAQRDATVLAYRSTKSLRADRRVLIKDGETRTNRMIEKSIRACTAGGFMRPVNEYLLCYQIVNFAHAWALKHWAFVDRFSLAEYVEEGLLLLVEPFLTAKGKTAMAKVPRSAEALVREPT.

An HTH tetR-type domain is found at 20 to 80 (EERRHQIISA…LTLKNVLDTY (61 aa)). The segment at residues 43–62 (TILQIAREAKVSTGLIYQYF) is a DNA-binding region (H-T-H motif).

Homodimer in solution.

Its activity is regulated as follows. Activity is regulated by the effector molecules 3-hydroxybenzoyl-CoA and benzoyl-CoA, which bind to HbdR, alleviating its repression on the three target promoters and inducing the expression of the hbd genes. Its function is as follows. Transcriptional regulator that controls the expression of the hbd cluster, which contains three catabolic operons and is responsible for the anaerobic degradation of 3-hydroxybenzoate. HbdR suppresses the activity of the three catabolic promoters (PhbdN, PhbdE and PhbdH) by binding to a conserved palindromic operator box. In addition, it slightly increases activity of its own promoter (PhbdR). The HbdR-mediated repression of hbd genes may play a crucial biological role in maintaining requisite hydroxybenzoate levels in the cell. This is HTH-type transcriptional regulator HbdR from Aromatoleum sp. (strain CIB) (Azoarcus sp. (strain CIB)).